A 400-amino-acid chain; its full sequence is Subtilisin-like protease 7 (400 aa).

The N-terminal stretch at 1 to 20 (MGFITKAIPLALAAMSVVNG) is a signal peptide. Residues 21–119 (AEILETRAGV…IERDARVQIN (99 aa)) constitute a propeptide that is removed on maturation. The Inhibitor I9 domain occupies 36-118 (KYIVIMNDGV…YIERDARVQI (83 aa)). The region spanning 129–400 (SWGLARVGSR…GKLINNGSGK (272 aa)) is the Peptidase S8 domain. Residues D161 and H192 each act as charge relay system in the active site. N-linked (GlcNAc...) asparagine glycosylation is found at N222 and N252. S346 serves as the catalytic Charge relay system. Residue N396 is glycosylated (N-linked (GlcNAc...) asparagine).

Belongs to the peptidase S8 family.

Its subcellular location is the secreted. In terms of biological role, secreted subtilisin-like serine protease with keratinolytic activity that contributes to pathogenicity. This is Subtilisin-like protease 7 (SUB7) from Arthroderma otae (strain ATCC MYA-4605 / CBS 113480) (Microsporum canis).